Here is a 306-residue protein sequence, read N- to C-terminus: MDEFEMIKRNTSEIISEEELREVLKKDEKSAYIGFEPSGKIHLGHYLQIKKMIDLQNAGFDIIILLADLHAYLNQKGELDEIRKIGDYNKKVFEAMGLKAKYVYGSEFQLDKDYTLNVYRLALKTTLKRARRSMELIAREDENPKVAEVIYPIMQVNDIHYLGVDVAVGGMEQRKIHMLARELLPKKVVCIHNPVLTGLDGEGKMSSSKGNFIAVDDSPEEIRAKIKKAYCPAGVVEGNPIMEIAKYFLEYPLTIKRPEKFGGDLTVNSYEELESLFKNKELHPMDLKNAVAEELIKILEPIRKRL.

Residues Tyr32 and Glu36 each coordinate L-tyrosine. Positions 37 to 45 match the 'HIGH' region motif; it reads PSGKIHLGH. The interval 151-158 is tyrosine; sequence YPIMQVND. Residue Gln173 participates in L-tyrosine binding. Positions 204–208 match the 'KMSKS' region motif; it reads KMSSS. Ser207 is an ATP binding site. 2 interaction with t-RNA regions span residues 228–231 and 283–288; these read KAYC and HPMDLK.

This sequence belongs to the class-I aminoacyl-tRNA synthetase family. TyrS type 3 subfamily. In terms of assembly, homodimer.

Its subcellular location is the cytoplasm. The enzyme catalyses tRNA(Tyr) + L-tyrosine + ATP = L-tyrosyl-tRNA(Tyr) + AMP + diphosphate + H(+). Catalyzes the attachment of tyrosine to tRNA(Tyr) in a two-step reaction: tyrosine is first activated by ATP to form Tyr-AMP and then transferred to the acceptor end of tRNA(Tyr). The sequence is that of Tyrosine--tRNA ligase (tyrS) from Methanocaldococcus jannaschii (strain ATCC 43067 / DSM 2661 / JAL-1 / JCM 10045 / NBRC 100440) (Methanococcus jannaschii).